Consider the following 1050-residue polypeptide: FHIP family protein GE18198 (1050 aa).

2 positions are modified to phosphoserine: S498 and S805. Disordered regions lie at residues 800–827 (KGNE…GQLR), 865–888 (TSMF…SASS), 911–954 (TDGR…SGSN), and 968–995 (SNTT…SEPA). Polar residues predominate over residues 808 to 826 (HHSQQQQMATNSGQQQGQL). Over residues 872-888 (SASNTSTTPPNGSSASS) the composition is skewed to low complexity. Residues 918–935 (HAQTSAGTCETSLSTQPQ) are compositionally biased toward polar residues. Positions 941-954 (TGAIATSATASGSN) are enriched in low complexity. Positions 968 to 977 (SNTTTHSAST) are enriched in polar residues.

This sequence belongs to the FHIP family.

The protein is FHIP family protein GE18198 of Drosophila yakuba (Fruit fly).